The chain runs to 436 residues: MDSVAFEDVAVNFTQEEWALLSPSQKNLYRDVTLETFRNLASVGIQWKDQDIENLYQNLGIKLRSLVERLCGRKEGNEHRETFSQIPDCHLNKKSQTGVKPCKCSVCGKVFLRHSFLDRHMRAHAGHKRSECGGEWRETPRKQKQHGKASISPSSGARRTVTPTRKRPYECKVCGKAFNSPNLFQIHQRTHTGKRSYKCREIVRAFTVSSFFRKHGKMHTGEKRYECKYCGKPIDYPSLFQIHVRTHTGEKPYKCKQCGKAFISAGYLRTHEIRSHALEKSHQCQECGKKLSCSSSLHRHERTHSGGKLYECQKCAKVFRCPTSLQAHERAHTGERPYECNKCGKTFNYPSCFRRHKKTHSGEKPYECTRCGKAFGWCSSLRRHEMTHTGEKPFDCKQCGKVFTFSNYLRLHERTHLAGRSQCFGRRQGDHLSPGV.

The 79-residue stretch at 4–82 folds into the KRAB domain; sequence VAFEDVAVNF…RKEGNEHRET (79 aa). Residues 102–124 form a C2H2-type 1 zinc finger; it reads CKCSVCGKVFLRHSFLDRHMRAH. Residues 128–141 show a composition bias toward basic and acidic residues; it reads KRSECGGEWRETPR. Positions 128-164 are disordered; the sequence is KRSECGGEWRETPRKQKQHGKASISPSSGARRTVTPT. The segment covering 151-163 has biased composition (polar residues); sequence ISPSSGARRTVTP. The C2H2-type 2 zinc finger occupies 169–191; the sequence is YECKVCGKAFNSPNLFQIHQRTH. The segment at 197–219 adopts a C2H2-type 3; degenerate zinc-finger fold; it reads YKCREIVRAFTVSSFFRKHGKMH. 7 C2H2-type zinc fingers span residues 225-247, 253-276, 282-304, 310-332, 338-360, 366-388, and 394-416; these read YECK…VRTH, YKCK…IRSH, HQCQ…ERTH, YECQ…ERAH, YECN…KKTH, YECT…EMTH, and FDCK…ERTH.

The protein belongs to the krueppel C2H2-type zinc-finger protein family. In terms of tissue distribution, expressed in a variety of adult and fetal tissues.

The protein localises to the nucleus. Functionally, may be involved in transcriptional regulation. This is Zinc finger protein 101 (ZNF101) from Homo sapiens (Human).